The sequence spans 362 residues: MTSQVNAVPTDSLAARLARPELLSLEPYQSARRIGGSGEIWVNANESPFNRTGIDGANRYPECQPPGLIAAYAAYAGVAAHELVCGRGADEAIELLIRTFCVPGQDSIGIFSPTYGMYAISAATFNVAVNTLPLAEDFSLPDDISALTGSKLVFVCNPNNPTGTLLPLGEIARVAKTFPNALVVVDEAYIEFAHNADGSPAQSATSLMAEFENLVILRTLSKAFGLAGARCGFLLAKPSVCELVMRVIAPYPVPVPVSVIAEKALSVMGIAQMRADVVLLNKQGARLALALTEAGLSVLPSGGNYVLAFSNDVEVLARALTKAGIVARRYSHPRLKDAIRISYASEQQTDSIIEAIGRIDSK.

The residue at position 222 (K222) is an N6-(pyridoxal phosphate)lysine.

The protein belongs to the class-II pyridoxal-phosphate-dependent aminotransferase family. Histidinol-phosphate aminotransferase subfamily. As to quaternary structure, homodimer. It depends on pyridoxal 5'-phosphate as a cofactor.

The catalysed reaction is L-histidinol phosphate + 2-oxoglutarate = 3-(imidazol-4-yl)-2-oxopropyl phosphate + L-glutamate. The protein operates within amino-acid biosynthesis; L-histidine biosynthesis; L-histidine from 5-phospho-alpha-D-ribose 1-diphosphate: step 7/9. The polypeptide is Histidinol-phosphate aminotransferase (Shewanella amazonensis (strain ATCC BAA-1098 / SB2B)).